Consider the following 599-residue polypeptide: Proline dehydrogenase 1, mitochondrial (599 aa).

2 disordered regions span residues 20–39 (STKP…LRGC) and 152–180 (EEAE…EKQY). Low complexity predominate over residues 23 to 39 (PQAQEQPPASPEALRGC). Over residues 153–180 (EAERKEMESCTSEAERDGSGANKREKQY) the composition is skewed to basic and acidic residues. N6-acetyllysine occurs at positions 356, 367, and 485.

Belongs to the proline oxidase family. Requires FAD as cofactor. Expressed in liver, kidney, heart and to a lesser extent in brain, lung and muscle.

It localises to the mitochondrion matrix. It catalyses the reaction L-proline + a quinone = (S)-1-pyrroline-5-carboxylate + a quinol + H(+). Its pathway is amino-acid degradation; L-proline degradation into L-glutamate; L-glutamate from L-proline: step 1/2. Functionally, converts proline to delta-1-pyrroline-5-carboxylate. This Mus musculus (Mouse) protein is Proline dehydrogenase 1, mitochondrial (Prodh).